Here is a 147-residue protein sequence, read N- to C-terminus: Ribosome maturation factor RimP (147 aa).

The protein belongs to the RimP family.

It localises to the cytoplasm. Functionally, required for maturation of 30S ribosomal subunits. The protein is Ribosome maturation factor RimP of Thermosipho melanesiensis (strain DSM 12029 / CIP 104789 / BI429).